Here is a 524-residue protein sequence, read N- to C-terminus: Coatomer subunit delta-1 (524 aa).

The interval 215–244 (MDMDSFASKPKGGRPSAAATAPGKGLGMKL) is disordered. Positions 283-524 (SDPVTVTIEE…RLVAANYQVV (242 aa)) constitute an MHD domain.

Belongs to the adaptor complexes medium subunit family. Delta-COP subfamily. As to quaternary structure, oligomeric complex that consists of at least the alpha, beta, beta', gamma, delta, epsilon and zeta subunits.

It localises to the cytoplasm. It is found in the golgi apparatus membrane. Its subcellular location is the cytoplasmic vesicle. The protein resides in the COPI-coated vesicle membrane. Functionally, the coatomer is a cytosolic protein complex that binds to dilysine motifs and reversibly associates with Golgi non-clathrin-coated vesicles, which further mediate biosynthetic protein transport from the ER, via the Golgi up to the trans Golgi network. Coatomer complex is required for budding from Golgi membranes, and is essential for the retrograde Golgi-to-ER transport of dilysine-tagged proteins. This chain is Coatomer subunit delta-1, found in Oryza sativa subsp. japonica (Rice).